Reading from the N-terminus, the 464-residue chain is 3-isopropylmalate dehydratase large subunit (464 aa).

3 residues coordinate [4Fe-4S] cluster: Cys337, Cys397, and Cys400.

The protein belongs to the aconitase/IPM isomerase family. LeuC type 1 subfamily. Heterodimer of LeuC and LeuD. The cofactor is [4Fe-4S] cluster.

It catalyses the reaction (2R,3S)-3-isopropylmalate = (2S)-2-isopropylmalate. It participates in amino-acid biosynthesis; L-leucine biosynthesis; L-leucine from 3-methyl-2-oxobutanoate: step 2/4. Catalyzes the isomerization between 2-isopropylmalate and 3-isopropylmalate, via the formation of 2-isopropylmaleate. The polypeptide is 3-isopropylmalate dehydratase large subunit (Bacillus cereus (strain B4264)).